We begin with the raw amino-acid sequence, 23 residues long: Septenin 2a (23 aa).

As to expression, expressed in skin glands.

Its subcellular location is the secreted. In terms of biological role, may act as an antimicrobial peptide. In Osteopilus septentrionalis (Cuban treefrog), this protein is Septenin 2a.